Consider the following 590-residue polypeptide: Aspartate--tRNA(Asp/Asn) ligase (590 aa).

E175 contacts L-aspartate. The tract at residues 199-202 is aspartate; the sequence is QQYK. Positions 221 and 450 each coordinate L-aspartate. 221-223 contacts ATP; it reads RDE. Residue E484 coordinates ATP. R491 is a binding site for L-aspartate. Residue 536 to 539 coordinates ATP; the sequence is GVDR.

The protein belongs to the class-II aminoacyl-tRNA synthetase family. Type 1 subfamily. Homodimer.

The protein localises to the cytoplasm. The enzyme catalyses tRNA(Asx) + L-aspartate + ATP = L-aspartyl-tRNA(Asx) + AMP + diphosphate. Aspartyl-tRNA synthetase with relaxed tRNA specificity since it is able to aspartylate not only its cognate tRNA(Asp) but also tRNA(Asn). Reaction proceeds in two steps: L-aspartate is first activated by ATP to form Asp-AMP and then transferred to the acceptor end of tRNA(Asp/Asn). This Bradyrhizobium diazoefficiens (strain JCM 10833 / BCRC 13528 / IAM 13628 / NBRC 14792 / USDA 110) protein is Aspartate--tRNA(Asp/Asn) ligase.